We begin with the raw amino-acid sequence, 80 residues long: Acyl carrier protein (80 aa).

One can recognise a Carrier domain in the interval 4–79 (EAILEKVRSI…DAVKYIEDKQ (76 aa)). Residue Ser39 is modified to O-(pantetheine 4'-phosphoryl)serine.

This sequence belongs to the acyl carrier protein (ACP) family. Post-translationally, 4'-phosphopantetheine is transferred from CoA to a specific serine of apo-ACP by AcpS. This modification is essential for activity because fatty acids are bound in thioester linkage to the sulfhydryl of the prosthetic group.

The protein localises to the cytoplasm. It functions in the pathway lipid metabolism; fatty acid biosynthesis. Its function is as follows. Carrier of the growing fatty acid chain in fatty acid biosynthesis. The protein is Acyl carrier protein of Prochlorococcus marinus (strain MIT 9313).